Reading from the N-terminus, the 162-residue chain is UPF0305 protein MmarC6_0221 (162 aa).

This sequence belongs to the UPF0305 family.

This Methanococcus maripaludis (strain C6 / ATCC BAA-1332) protein is UPF0305 protein MmarC6_0221.